Consider the following 137-residue polypeptide: Succinate dehydrogenase cytochrome b560 subunit (137 aa).

2 consecutive transmembrane segments (helical) span residues 31–51 (AFLA…DLSL) and 60–80 (FFFL…FTLL). Histidine 85 is a heme binding site. A helical transmembrane segment spans residues 106-126 (VYTSGIIMLFCAAFLALLNII).

The protein belongs to the cytochrome b560 family. In terms of assembly, forms part of complex II containing four subunits: a 70 kDa flavoprotein (FP), a 27 kDa iron-sulfur protein (IP), a cytochrome B and a membrane-anchoring protein. Heme is required as a cofactor.

The protein resides in the mitochondrion inner membrane. It participates in carbohydrate metabolism; tricarboxylic acid cycle. Functionally, membrane-anchoring subunit of succinate dehydrogenase (SDH) that is involved in complex II of the mitochondrial electron transport chain and is responsible for transferring electrons from succinate to ubiquinone (coenzyme Q). The chain is Succinate dehydrogenase cytochrome b560 subunit (SDH3) from Marchantia polymorpha (Common liverwort).